We begin with the raw amino-acid sequence, 259 residues long: Small ribosomal subunit protein eS1 (259 aa).

The protein belongs to the eukaryotic ribosomal protein eS1 family. Component of the small ribosomal subunit. Mature ribosomes consist of a small (40S) and a large (60S) subunit. The 40S subunit contains about 33 different proteins and 1 molecule of RNA (18S). The 60S subunit contains about 49 different proteins and 3 molecules of RNA (25S, 5.8S and 5S).

It localises to the cytoplasm. This is Small ribosomal subunit protein eS1 from Monosiga brevicollis (Choanoflagellate).